A 351-amino-acid polypeptide reads, in one-letter code: Homocitrate synthase (351 aa).

Residues 23–272 form the Pyruvate carboxyltransferase domain; it reads IKFCDTTLRD…KLPVDLDTTS (250 aa).

This sequence belongs to the alpha-IPM synthase/homocitrate synthase family.

It catalyses the reaction acetyl-CoA + 2-oxoglutarate + H2O = (2R)-homocitrate + CoA + H(+). Its function is as follows. This protein is a Fe-Mo-cofactor biosynthetic component. This chain is Homocitrate synthase (nifV), found in Frankia alni.